Here is a 209-residue protein sequence, read N- to C-terminus: Large ribosomal subunit protein uL3 (209 aa).

It belongs to the universal ribosomal protein uL3 family. Part of the 50S ribosomal subunit. Forms a cluster with proteins L14 and L19.

Functionally, one of the primary rRNA binding proteins, it binds directly near the 3'-end of the 23S rRNA, where it nucleates assembly of the 50S subunit. This is Large ribosomal subunit protein uL3 from Oceanobacillus iheyensis (strain DSM 14371 / CIP 107618 / JCM 11309 / KCTC 3954 / HTE831).